A 145-amino-acid polypeptide reads, in one-letter code: Putative esterase PA1618 (145 aa).

It belongs to the thioesterase PaaI family.

The sequence is that of Putative esterase PA1618 from Pseudomonas aeruginosa (strain ATCC 15692 / DSM 22644 / CIP 104116 / JCM 14847 / LMG 12228 / 1C / PRS 101 / PAO1).